The sequence spans 408 residues: Dual-specificity RNA methyltransferase RlmN (408 aa).

Residue Glu-93 is the Proton acceptor of the active site. Positions 99–379 constitute a Radical SAM core domain; that stretch reads ETNRGTLCIS…TTTRKTRGDD (281 aa). Cysteines 106 and 384 form a disulfide. [4Fe-4S] cluster-binding residues include Cys-113, Cys-117, and Cys-120. A disordered region spans residues 152–196; sequence SPAGSKDGDGGPDHASRATKLDHRAADAKGVQSDSWRSSDPEEDH. A compositionally biased stretch (basic and acidic residues) spans 157 to 178; it reads KDGDGGPDHASRATKLDHRAAD. S-adenosyl-L-methionine contacts are provided by residues 210-211, Ser-242, 264-266, and Asn-341; these read GE and SLH. Cys-384 serves as the catalytic S-methylcysteine intermediate.

It belongs to the radical SAM superfamily. RlmN family. [4Fe-4S] cluster is required as a cofactor.

It is found in the cytoplasm. It catalyses the reaction adenosine(2503) in 23S rRNA + 2 reduced [2Fe-2S]-[ferredoxin] + 2 S-adenosyl-L-methionine = 2-methyladenosine(2503) in 23S rRNA + 5'-deoxyadenosine + L-methionine + 2 oxidized [2Fe-2S]-[ferredoxin] + S-adenosyl-L-homocysteine. It carries out the reaction adenosine(37) in tRNA + 2 reduced [2Fe-2S]-[ferredoxin] + 2 S-adenosyl-L-methionine = 2-methyladenosine(37) in tRNA + 5'-deoxyadenosine + L-methionine + 2 oxidized [2Fe-2S]-[ferredoxin] + S-adenosyl-L-homocysteine. Functionally, specifically methylates position 2 of adenine 2503 in 23S rRNA and position 2 of adenine 37 in tRNAs. m2A2503 modification seems to play a crucial role in the proofreading step occurring at the peptidyl transferase center and thus would serve to optimize ribosomal fidelity. The polypeptide is Dual-specificity RNA methyltransferase RlmN (Aromatoleum aromaticum (strain DSM 19018 / LMG 30748 / EbN1) (Azoarcus sp. (strain EbN1))).